The primary structure comprises 334 residues: Cathepsin J (334 aa).

Residues 1-17 form the signal peptide; it reads MTPTVLLLILCFGVASG. A propeptide spans 18–113 (activation peptide); it reads AQAHDPKLDA…PHAQNHVSIG (96 aa). An N-linked (GlcNAc...) asparagine glycan is attached at N72. Intrachain disulfides connect C135/C178 and C169/C211. C138 is a catalytic residue. N217, N221, and N268 each carry an N-linked (GlcNAc...) asparagine glycan. A disulfide bridge connects residues C269 and C322. Active-site residues include H276 and N300.

It belongs to the peptidase C1 family. Expressed specifically in placenta.

The protein resides in the lysosome. The sequence is that of Cathepsin J (Ctsj) from Mus musculus (Mouse).